A 366-amino-acid polypeptide reads, in one-letter code: 15-cis-zeta-carotene isomerase, chloroplastic (366 aa).

The transit peptide at 1 to 45 directs the protein to the chloroplast; that stretch reads MASQLRLHLAATPPLLPHRRPHLARPLCPTLNPIRAPLPPLSRVL. 6 consecutive transmembrane segments (helical) span residues 94–114, 136–156, 171–191, 203–223, 260–280, and 338–358; these read SWAYFAGILGAVLVALNVLWI, EVVMLLLTIIFAVVHSGMASL, VLFAGISLPLAVTTIVYFINH, GITGIHELLWFSSFISFFFLY, VIWCLAHTLWIGNSVAVAASV, and LPYVAITMLTLGAYFAHPLMQ.

Expressed in leaves and roots, and at lower levels in embryos and endosperm.

Its subcellular location is the plastid. It localises to the chloroplast membrane. It catalyses the reaction 9,9',15-tri-cis-zeta-carotene = 9,9'-di-cis-zeta-carotene. In terms of biological role, isomerase involved in the biosynthesis of carotenoids. Catalyzes the cis- to trans-conversion of the 15-cis-bond in 9,15,9'-tri-cis-zeta-carotene. The sequence is that of 15-cis-zeta-carotene isomerase, chloroplastic from Zea mays (Maize).